The primary structure comprises 137 residues: MTQRSLVLLKPDAVRRGLTGEIISRIERKAGWQITALELRTLDTETLEQHYGEHKGKPFYEPLVEFMASGPVVAMVVEGERVIEGVRALAGPTDPIAAAPGSIRGDYGVIVRENLIHASDSEESAERELKIFFPGRV.

ATP contacts are provided by lysine 10, phenylalanine 59, arginine 87, threonine 93, arginine 104, and asparagine 114. Residue histidine 117 is the Pros-phosphohistidine intermediate of the active site.

It belongs to the NDK family. As to quaternary structure, homotetramer. Mg(2+) serves as cofactor.

The protein resides in the cytoplasm. The catalysed reaction is a 2'-deoxyribonucleoside 5'-diphosphate + ATP = a 2'-deoxyribonucleoside 5'-triphosphate + ADP. It catalyses the reaction a ribonucleoside 5'-diphosphate + ATP = a ribonucleoside 5'-triphosphate + ADP. In terms of biological role, major role in the synthesis of nucleoside triphosphates other than ATP. The ATP gamma phosphate is transferred to the NDP beta phosphate via a ping-pong mechanism, using a phosphorylated active-site intermediate. The protein is Nucleoside diphosphate kinase of Streptomyces coelicolor (strain ATCC BAA-471 / A3(2) / M145).